The primary structure comprises 514 residues: Cilia- and flagella-associated protein 53 (514 aa).

Coiled coils occupy residues 91–148 and 203–474; these read IINI…RQDF and KLWE…REFE.

The protein belongs to the CFAP53 family. In terms of assembly, microtubule inner protein component of sperm flagellar doublet microtubules. Interacts with PIERCE1 and PIERCE2; the interactions link outer dynein arms docking complex (ODA-DC) to the internal microtubule inner proteins (MIP) in cilium axoneme. Interacts with CCDC38. Interacts with CCDC42 and IFT88. Interacts with centriolar satellite proteins PIBF1/CEP90 and PCM1. Interacts with dyneins DNAIC1, DNAIC2 AND DNAH11 and with ODA-DC component ODAD4/TTC25. Expressed in skin fibroblasts (at protein level). Expressed in nasal respiratory epithelial cells (at protein level). Expressed in airway epithelial cells.

Its subcellular location is the cytoplasm. It localises to the cytoskeleton. It is found in the cilium axoneme. The protein localises to the flagellum axoneme. The protein resides in the microtubule organizing center. Its subcellular location is the centrosome. It localises to the centriole. It is found in the centriolar satellite. The protein localises to the spindle pole. The protein resides in the cell projection. Its subcellular location is the cilium. In terms of biological role, microtubule inner protein (MIP) part of the dynein-decorated doublet microtubules (DMTs) in cilia axoneme, which is required for motile cilia beating. Regulates motility patterns of both 9+0 and 9+2 motile cilia through differential localization and recruitment of axonemal dynein components. Required for centriolar satellite integrity and non-motile cilium assembly. Required for motile cilium formation. Through its role in the beating of primary cilia, involved in the establishment of organ laterality during embryogenesis. Required for sperm flagellum biogenesis and is essential for male fertility. The polypeptide is Cilia- and flagella-associated protein 53 (Homo sapiens (Human)).